The chain runs to 61 residues: Myrmicitoxin(1)-Pm5a (61 aa).

Residues 1 to 23 (MKAIIFLFAVLTVVAIIIPIISG) form the signal peptide. A propeptide spanning residues 24 to 33 (EPNAGPLAAS) is cleaved from the precursor. Q60 carries the glutamine amide modification.

It belongs to the formicidae venom clade 2 family. As to expression, expressed by the venom gland.

Its subcellular location is the secreted. In terms of biological role, toxin that causes a rapid and irreversible paralysis when intrathoracically injected into insects (blowflies). Does not cause spontaneous nocifensive behaviors by intraplantar injection in mice. This Pogonomyrmex maricopa (Maricopa harvester ant) protein is Myrmicitoxin(1)-Pm5a.